The sequence spans 284 residues: Acetylglutamate kinase (284 aa).

Residues 66–67 (GG), Arg88, and Asn179 each bind substrate.

It belongs to the acetylglutamate kinase family. ArgB subfamily.

The protein localises to the cytoplasm. It carries out the reaction N-acetyl-L-glutamate + ATP = N-acetyl-L-glutamyl 5-phosphate + ADP. It participates in amino-acid biosynthesis; L-arginine biosynthesis; N(2)-acetyl-L-ornithine from L-glutamate: step 2/4. Functionally, catalyzes the ATP-dependent phosphorylation of N-acetyl-L-glutamate. The polypeptide is Acetylglutamate kinase (Actinobacillus pleuropneumoniae serotype 5b (strain L20)).